Here is a 285-residue protein sequence, read N- to C-terminus: tRNA-cytidine(32) 2-sulfurtransferase (285 aa).

A PP-loop motif motif is present at residues 48 to 53 (SGGKDS). Positions 122, 125, and 213 each coordinate [4Fe-4S] cluster.

Belongs to the TtcA family. Homodimer. Requires Mg(2+) as cofactor. [4Fe-4S] cluster is required as a cofactor.

The protein resides in the cytoplasm. The enzyme catalyses cytidine(32) in tRNA + S-sulfanyl-L-cysteinyl-[cysteine desulfurase] + AH2 + ATP = 2-thiocytidine(32) in tRNA + L-cysteinyl-[cysteine desulfurase] + A + AMP + diphosphate + H(+). It functions in the pathway tRNA modification. Catalyzes the ATP-dependent 2-thiolation of cytidine in position 32 of tRNA, to form 2-thiocytidine (s(2)C32). The sulfur atoms are provided by the cysteine/cysteine desulfurase (IscS) system. This is tRNA-cytidine(32) 2-sulfurtransferase from Cytophaga hutchinsonii (strain ATCC 33406 / DSM 1761 / CIP 103989 / NBRC 15051 / NCIMB 9469 / D465).